Consider the following 248-residue polypeptide: ATP synthase subunit a, chloroplastic (248 aa).

4 helical membrane-spanning segments follow: residues L34 to L54, V95 to I115, I134 to S154, and V203 to A223.

This sequence belongs to the ATPase A chain family. F-type ATPases have 2 components, CF(1) - the catalytic core - and CF(0) - the membrane proton channel. CF(1) has five subunits: alpha(3), beta(3), gamma(1), delta(1), epsilon(1). CF(0) has four main subunits: a, b, b' and c.

The protein localises to the plastid. The protein resides in the chloroplast thylakoid membrane. In terms of biological role, key component of the proton channel; it plays a direct role in the translocation of protons across the membrane. The polypeptide is ATP synthase subunit a, chloroplastic (Guillardia theta (Cryptophyte)).